We begin with the raw amino-acid sequence, 577 residues long: Copine-8 (577 aa).

2 consecutive C2 domains span residues 19-146 (TSAT…RLEK) and 155-278 (KCGT…FNVY). Aspartate 52, aspartate 58, aspartate 112, aspartate 114, serine 117, lysine 122, aspartate 124, aspartate 186, aspartate 192, aspartate 248, aspartate 250, and aspartate 256 together coordinate Ca(2+). Phosphoserine is present on serine 273. A VWFA domain is found at 322 to 523 (NFTVAIDFTA…VQFVPFRDYI (202 aa)).

This sequence belongs to the copine family. The cofactor is Ca(2+).

Functionally, probable calcium-dependent phospholipid-binding protein that may play a role in calcium-mediated intracellular processes. This Mus musculus (Mouse) protein is Copine-8.